A 129-amino-acid chain; its full sequence is UPF0325 protein PC1_0937 (129 aa).

The protein belongs to the UPF0325 family.

The protein is UPF0325 protein PC1_0937 of Pectobacterium carotovorum subsp. carotovorum (strain PC1).